The following is an 89-amino-acid chain: Small ribosomal subunit protein uS14A (89 aa).

The protein belongs to the universal ribosomal protein uS14 family. Part of the 30S ribosomal subunit. Contacts proteins S3 and S10.

Binds 16S rRNA, required for the assembly of 30S particles and may also be responsible for determining the conformation of the 16S rRNA at the A site. In Bacillus pumilus (strain SAFR-032), this protein is Small ribosomal subunit protein uS14A.